Here is a 345-residue protein sequence, read N- to C-terminus: MGEFMNSGMGIILTIAAQGLLVIAFVMISLLFLVYGDRKIWAAVQLRRGPNVVGAFGLLQTVADAAKYIFKEVVVPAGVDRPVFFLAPLISFVLAVLAWAVIPFSPGWVLSDINVAILFVFAASSLEVYGVIMGGWASNSKYPFLGSLRSAAQMISYEVSLGLIIIGIIISTGSMNLSHIVEAQDGAFGLFNWYWLPHLPMVALFFISALAETNRPPFDLPEAESELVAGFQVEYSSTPFLLFMAGEYIAIFLMCALMSLLFFGGWLSPIPGLPDGVFWMVAKMAFFFFLFAMVKAIVPRYRYDQLMRIGWKVFLPFSLGWVVLVAFLAKFEVFGGFWARWAMGG.

9 helical membrane passes run 11 to 31 (IILT…ISLL), 50 to 70 (PNVV…KYIF), 84 to 104 (FFLA…VIPF), 115 to 135 (VAIL…IMGG), 161 to 181 (LGLI…SHIV), 187 to 207 (AFGL…LFFI), 248 to 268 (YIAI…GWLS), 277 to 297 (VFWM…VKAI), and 309 to 329 (IGWK…AFLA).

It belongs to the complex I subunit 1 family. NDH-1 is composed of 14 different subunits. Subunits NuoA, H, J, K, L, M, N constitute the membrane sector of the complex.

The protein resides in the cell inner membrane. The enzyme catalyses a quinone + NADH + 5 H(+)(in) = a quinol + NAD(+) + 4 H(+)(out). NDH-1 shuttles electrons from NADH, via FMN and iron-sulfur (Fe-S) centers, to quinones in the respiratory chain. The immediate electron acceptor for the enzyme in this species is believed to be ubiquinone. Couples the redox reaction to proton translocation (for every two electrons transferred, four hydrogen ions are translocated across the cytoplasmic membrane), and thus conserves the redox energy in a proton gradient. This subunit may bind ubiquinone. The protein is NADH-quinone oxidoreductase subunit H 1 of Cereibacter sphaeroides (strain ATCC 17023 / DSM 158 / JCM 6121 / CCUG 31486 / LMG 2827 / NBRC 12203 / NCIMB 8253 / ATH 2.4.1.) (Rhodobacter sphaeroides).